The chain runs to 372 residues: DNA replication and repair protein RecF (372 aa).

30 to 37 is a binding site for ATP; sequence GDNGQGKT.

It belongs to the RecF family.

It localises to the cytoplasm. Its function is as follows. The RecF protein is involved in DNA metabolism; it is required for DNA replication and normal SOS inducibility. RecF binds preferentially to single-stranded, linear DNA. It also seems to bind ATP. In Ruminiclostridium cellulolyticum (strain ATCC 35319 / DSM 5812 / JCM 6584 / H10) (Clostridium cellulolyticum), this protein is DNA replication and repair protein RecF.